Here is a 396-residue protein sequence, read N- to C-terminus: MATETFLYTSESVNEGHPDKLCDQISDAVLDACLEQDPDSKVACETCTKTNMVMVFGEITTKANVDYEKIVRNTCRNIGFVSDDVGLDADNCKVLVNIEQQSPDIAQGVHGHLTKRPEEIGAGDQGHMFGYATDETPELMPLTHVLATKLGAKLTEVRKNGTCPWLRPDGKTQVTIEYFNDKGAMVPIRVHTVLISTQHDETVTNDEIAADLKQHVIKPVIPEKYLDEKTIFHLNPSGRFVIGGPHGDAGLTGRKIIIDTYGGWGAHGGGAFSGKDPTKVDRSGAYIVRQAAKSIVANGLARRCIVQVSYAIGVPEPLSVFVDSYGTGKIPDKEILNIVKETFDFRPGMISINLDLKRGGNNRFLKTAAYGHFGRDDADFTWEVVKPLKGGKLATA.

Glu-11 is a binding site for Mg(2+). His-17 lines the ATP pocket. A K(+)-binding site is contributed by Glu-45. Glu-58 and Gln-101 together coordinate L-methionine. Residues 169 to 171, 237 to 240, Asp-248, 254 to 255, Ala-271, Lys-275, and Lys-279 each bind ATP; these read DGK, SGRF, and RK. Asp-248 contributes to the L-methionine binding site. L-methionine is bound at residue Lys-279.

This sequence belongs to the AdoMet synthase family. As to quaternary structure, homotetramer. It depends on Mn(2+) as a cofactor. Requires Mg(2+) as cofactor. Co(2+) is required as a cofactor. K(+) serves as cofactor.

Its subcellular location is the cytoplasm. The catalysed reaction is L-methionine + ATP + H2O = S-adenosyl-L-methionine + phosphate + diphosphate. Its pathway is amino-acid biosynthesis; S-adenosyl-L-methionine biosynthesis; S-adenosyl-L-methionine from L-methionine: step 1/1. Its function is as follows. Catalyzes the formation of S-adenosylmethionine from methionine and ATP. The reaction comprises two steps that are both catalyzed by the same enzyme: formation of S-adenosylmethionine (AdoMet) and triphosphate, and subsequent hydrolysis of the triphosphate. The sequence is that of S-adenosylmethionine synthase (SAMS) from Medicago sativa subsp. falcata (Sickle medic).